Reading from the N-terminus, the 363-residue chain is Histidinol-phosphate aminotransferase (363 aa).

Residue lysine 218 is modified to N6-(pyridoxal phosphate)lysine.

The protein belongs to the class-II pyridoxal-phosphate-dependent aminotransferase family. Histidinol-phosphate aminotransferase subfamily. Homodimer. It depends on pyridoxal 5'-phosphate as a cofactor.

The enzyme catalyses L-histidinol phosphate + 2-oxoglutarate = 3-(imidazol-4-yl)-2-oxopropyl phosphate + L-glutamate. It functions in the pathway amino-acid biosynthesis; L-histidine biosynthesis; L-histidine from 5-phospho-alpha-D-ribose 1-diphosphate: step 7/9. The chain is Histidinol-phosphate aminotransferase from Xanthomonas euvesicatoria pv. vesicatoria (strain 85-10) (Xanthomonas campestris pv. vesicatoria).